The primary structure comprises 253 residues: UPF0246 protein lhv_1883 (253 aa).

Belongs to the UPF0246 family.

The chain is UPF0246 protein lhv_1883 from Lactobacillus helveticus (strain DPC 4571).